The chain runs to 1115 residues: Disheveled-associated activator of morphogenesis 2 (1115 aa).

Positions glycine 40–valine 416 constitute a GBD/FH3 domain. The stretch at methionine 434 to serine 515 forms a coiled coil. 2 disordered regions span residues arginine 510–leucine 605 and glutamine 655–glycine 697. One can recognise an FH1 domain in the interval proline 518–serine 694. Over residues leucine 540–histidine 583 the composition is skewed to pro residues. The region spanning lysine 595 to methionine 1042 is the FH2 domain. Residues glutamate 1065–lysine 1095 enclose the DAD domain.

It belongs to the formin homology family. In terms of assembly, interacts with DVL3. Interacts with INF2. As to expression, in early embryogenesis, expression is confined to embryonic ectoderm. Highly dynamic expression in later stages of gastrulation. In early somite stages, detected in posterior node and persists until 9-10 somites have developed when expression is concentrated in the chordoneural hinge. During organogenesis, expressed in the CNS, PNS, liver primordia, limb buds and genital tubercle.

Key regulator of the Wnt signaling pathway, which is required for various processes during development, such as dorsal patterning, determination of left/right symmetry or myelination in the central nervous system. Acts downstream of Wnt ligands and upstream of beta-catenin (CTNNB1). Required for canonical Wnt signaling pathway during patterning in the dorsal spinal cord by promoting the aggregation of Disheveled (Dvl) complexes, thereby clustering and formation of Wnt receptor signalosomes and potentiating Wnt activity. During dorsal patterning of the spinal cord, inhibits oligodendrocytes differentiation via interaction with PIP5K1A. Also regulates non-canonical Wnt signaling pathway. Acts downstream of PITX2 in the developing gut and is required for left/right asymmetry within dorsal mesentery: affects mesenchymal condensation by lengthening cadherin-based junctions through WNT5A and non-canonical Wnt signaling, inducing polarized condensation in the left dorsal mesentery necessary to initiate gut rotation. Together with DAAM1, required for myocardial maturation and sarcomere assembly. Is a regulator of actin nucleation and elongation, filopodia formation and podocyte migration. The polypeptide is Disheveled-associated activator of morphogenesis 2 (Mus musculus (Mouse)).